The primary structure comprises 226 residues: Histidine biosynthesis bifunctional protein HisIE (226 aa).

The phosphoribosyl-AMP cyclohydrolase stretch occupies residues 1–131; it reads MMPMNQEFIQ…STFNRPLSNT (131 aa). Residues 132–226 are phosphoribosyl-ATP pyrophosphohydrolase; that stretch reads CSELFEVIKD…KRRQSKSNPK (95 aa).

This sequence in the N-terminal section; belongs to the PRA-CH family. The protein in the C-terminal section; belongs to the PRA-PH family.

It is found in the cytoplasm. The catalysed reaction is 1-(5-phospho-beta-D-ribosyl)-ATP + H2O = 1-(5-phospho-beta-D-ribosyl)-5'-AMP + diphosphate + H(+). It carries out the reaction 1-(5-phospho-beta-D-ribosyl)-5'-AMP + H2O = 1-(5-phospho-beta-D-ribosyl)-5-[(5-phospho-beta-D-ribosylamino)methylideneamino]imidazole-4-carboxamide. It participates in amino-acid biosynthesis; L-histidine biosynthesis; L-histidine from 5-phospho-alpha-D-ribose 1-diphosphate: step 2/9. Its pathway is amino-acid biosynthesis; L-histidine biosynthesis; L-histidine from 5-phospho-alpha-D-ribose 1-diphosphate: step 3/9. This is Histidine biosynthesis bifunctional protein HisIE from Prochlorococcus marinus (strain SARG / CCMP1375 / SS120).